A 190-amino-acid polypeptide reads, in one-letter code: Small ribosomal subunit protein mS23 (190 aa).

Alanine 2 is modified (N-acetylalanine). An N6-succinyllysine modification is found at lysine 83. N6-acetyllysine is present on lysine 102. The tract at residues 137-190 (KARTQQEGSQVSRKSESMGVESQTALEENPPLKEVPQAQHLESPGEESKGLSPP) is disordered.

Belongs to the mitochondrion-specific ribosomal protein mS23 family. Component of the mitochondrial ribosome small subunit (28S) which comprises a 12S rRNA and about 30 distinct proteins.

It localises to the mitochondrion. The sequence is that of Small ribosomal subunit protein mS23 from Bos taurus (Bovine).